Reading from the N-terminus, the 1018-residue chain is Fibronectin-binding protein A (1018 aa).

The signal sequence occupies residues 1 to 36 (MKNNLRYGIRKHKLGAASVFLGTMIVVGMGQDKEAA). Residues 7-18 (YGIRKHKLGAAS) carry the YSIRK-G/S signaling motif motif. Residues 37–511 (ASEQKTTTVE…SNKANGNGKN (475 aa)) are ligand-binding A region. Disordered regions lie at residues 38–61 (SEQK…SETQ) and 78–195 (ATVT…ETGT). 2 stretches are compositionally biased toward polar residues: residues 39–61 (EQKT…SETQ) and 78–92 (ATVT…QVTT). The span at 112–126 (TVKEEVVKEEAKPQV) shows a compositional bias: basic and acidic residues. The segment covering 129-139 (TTQSQDNSGDQ) has biased composition (polar residues). Residues 194-511 (GTDVTSKVTV…SNKANGNGKN (318 aa)) form a fibrinogen/elastin/tropoelastin-binding region. The tract at residues 512–872 (GPIIQNNKFE…EGQQTIEEDT (361 aa)) is fibronectin-binding. Residues 545 to 574 (EEYDSSTLDIDYHTAIDGGGGYVDGYIETI) form a B-1 repeat. The interval 545–604 (EEYDSSTLDIDYHTAIDGGGGYVDGYIETIEETDSSAIDIDYHTAVDSEAGHVGGYTESS) is 2 X approximate tandem repeats. A B-2 repeat occupies 575–604 (EETDSSAIDIDYHTAVDSEAGHVGGYTESS). Disordered regions lie at residues 595-622 (GHVG…NSKH), 740-813 (LGYE…DIDF), and 827-997 (EIIE…GMLF). The stretch at 745 to 782 (GQNSGNQSFEEDTEEDKPKYEQGGNIVDIDFDSVPQIH) is one D-1 repeat. The 4 X approximate tandem repeats stretch occupies residues 745-878 (GQNSGNQSFE…EEDTTPPIVP (134 aa)). The stretch at 783–820 (GQNKGNQSFEEDTEKDKPKYEHGGNIIDIDFDSVPHIH) is one D-2 repeat. The D-3 repeat unit spans residues 821–859 (GFNKHTEIIEEDTNKDKPSYQFGGHNSVDFEEDTLPKVS). Residues 827–838 (EIIEEDTNKDKP) are compositionally biased toward basic and acidic residues. One copy of the D-4; truncated repeat lies at 860 to 878 (GQNEGQQTIEEDTTPPIVP). A compositionally biased stretch (pro residues) spans 875 to 938 (PIVPPTPPTP…PAEPGKPVPP (64 aa)). WR repeat units follow at residues 879–892 (PTPP…EPET), 893–906 (PTPP…EPET), 907–920 (PTPP…EPET), 921–934 (PTPP…EPGK), and 935–948 (PVPP…KPSK). The 5 X tandem repeats, Pro-rich (WR) stretch occupies residues 879–948 (PTPPTPEVPS…AKEEPKKPSK (70 aa)). Positions 982–986 (LPETG) match the LPXTG sorting signal motif. A Pentaglycyl murein peptidoglycan amidated threonine modification is found at Thr985. Positions 986–1018 (GGEESTNKGMLFGGLFSILGLALLRRNKKNHKA) are cleaved as a propeptide — removed by sortase.

It localises to the secreted. The protein localises to the cell wall. In terms of biological role, promotes bacterial attachment to multiple substrates, such as fibronectin (Fn), fibrinogen (Fg), elastin peptides and tropoelastin. This confers to S.aureus the ability to invade endothelial cells. Promotes adherence to and aggregation of activated platelets. The chain is Fibronectin-binding protein A from Staphylococcus aureus (strain USA300).